Reading from the N-terminus, the 365-residue chain is Phosphoserine aminotransferase (365 aa).

Arg40 is a binding site for L-glutamate. Pyridoxal 5'-phosphate is bound by residues 74 to 75, Phe99, Thr155, Asp177, and Gln200; that span reads AS. Residue Lys201 is modified to N6-(pyridoxal phosphate)lysine. 241–242 provides a ligand contact to pyridoxal 5'-phosphate; it reads NT.

The protein belongs to the class-V pyridoxal-phosphate-dependent aminotransferase family. SerC subfamily. As to quaternary structure, homodimer. It depends on pyridoxal 5'-phosphate as a cofactor.

It localises to the cytoplasm. The catalysed reaction is O-phospho-L-serine + 2-oxoglutarate = 3-phosphooxypyruvate + L-glutamate. It carries out the reaction 4-(phosphooxy)-L-threonine + 2-oxoglutarate = (R)-3-hydroxy-2-oxo-4-phosphooxybutanoate + L-glutamate. It functions in the pathway amino-acid biosynthesis; L-serine biosynthesis; L-serine from 3-phospho-D-glycerate: step 2/3. Functionally, catalyzes the reversible conversion of 3-phosphohydroxypyruvate to phosphoserine and of 3-hydroxy-2-oxo-4-phosphonooxybutanoate to phosphohydroxythreonine. The protein is Phosphoserine aminotransferase of Lactococcus lactis subsp. lactis (strain IL1403) (Streptococcus lactis).